A 419-amino-acid polypeptide reads, in one-letter code: Histidine--tRNA ligase (419 aa).

This sequence belongs to the class-II aminoacyl-tRNA synthetase family. As to quaternary structure, homodimer.

It is found in the cytoplasm. The enzyme catalyses tRNA(His) + L-histidine + ATP = L-histidyl-tRNA(His) + AMP + diphosphate + H(+). This is Histidine--tRNA ligase from Desulforamulus reducens (strain ATCC BAA-1160 / DSM 100696 / MI-1) (Desulfotomaculum reducens).